We begin with the raw amino-acid sequence, 275 residues long: Cis-2,3-dihydrobiphenyl-2,3-diol dehydrogenase (275 aa).

9-33 (LITGGASGLGRALVDRFVAEAKVAV) provides a ligand contact to NAD(+). S140 contributes to the substrate binding site. Residue Y153 is the Proton acceptor of the active site.

It belongs to the short-chain dehydrogenases/reductases (SDR) family.

It carries out the reaction (2R,3S)-3-phenylcyclohexa-3,5-diene-1,2-diol + NAD(+) = biphenyl-2,3-diol + NADH + H(+). It participates in xenobiotic degradation; biphenyl degradation; 2-hydroxy-2,4-pentadienoate and benzoate from biphenyl: step 2/4. The polypeptide is Cis-2,3-dihydrobiphenyl-2,3-diol dehydrogenase (bphB) (Metapseudomonas furukawaii (Pseudomonas furukawaii)).